The primary structure comprises 252 residues: Phosphoribosyl-ATP pyrophosphatase (252 aa).

Belongs to the PRA-PH family.

Its subcellular location is the cytoplasm. The enzyme catalyses 1-(5-phospho-beta-D-ribosyl)-ATP + H2O = 1-(5-phospho-beta-D-ribosyl)-5'-AMP + diphosphate + H(+). It participates in amino-acid biosynthesis; L-histidine biosynthesis; L-histidine from 5-phospho-alpha-D-ribose 1-diphosphate: step 2/9. This is Phosphoribosyl-ATP pyrophosphatase from Magnetococcus marinus (strain ATCC BAA-1437 / JCM 17883 / MC-1).